Here is a 183-residue protein sequence, read N- to C-terminus: Ras-related protein Rap-2c (183 aa).

10–17 (GSGGVGKS) lines the GTP pocket. An Effector region motif is present at residues 32 to 40 (YDPTIEDFY). Residues 57–61 (DTAGT) and 116–119 (NKVD) contribute to the GTP site. Residues cysteine 176 and cysteine 177 are each lipidated (S-palmitoyl cysteine). Residue cysteine 180 is modified to Cysteine methyl ester. The S-geranylgeranyl cysteine moiety is linked to residue cysteine 180. A propeptide spans 181–183 (VVQ) (removed in mature form).

It belongs to the small GTPase superfamily. Ras family. Palmitoylated. Palmitoylation is required for association with recycling endosome membranes and activation of TNIK.

It is found in the cytoplasm. The protein resides in the recycling endosome membrane. It carries out the reaction GTP + H2O = GDP + phosphate + H(+). In terms of biological role, small GTP-binding protein which cycles between a GDP-bound inactive and a GTP-bound active form. May play a role in cytoskeletal rearrangements and regulate cell spreading through activation of the effector TNIK. May play a role in SRE-mediated gene transcription. The polypeptide is Ras-related protein Rap-2c (RAP2C) (Bos taurus (Bovine)).